A 31-amino-acid chain; its full sequence is Cytochrome b6-f complex subunit 6 (31 aa).

The chain crosses the membrane as a helical span at residues 4-24; the sequence is ITSYFGFLLAALTITSALFIG.

The protein belongs to the PetL family. The 4 large subunits of the cytochrome b6-f complex are cytochrome b6, subunit IV (17 kDa polypeptide, PetD), cytochrome f and the Rieske protein, while the 4 small subunits are PetG, PetL, PetM and PetN. The complex functions as a dimer.

The protein localises to the plastid. It localises to the chloroplast thylakoid membrane. Component of the cytochrome b6-f complex, which mediates electron transfer between photosystem II (PSII) and photosystem I (PSI), cyclic electron flow around PSI, and state transitions. PetL is important for photoautotrophic growth as well as for electron transfer efficiency and stability of the cytochrome b6-f complex. This is Cytochrome b6-f complex subunit 6 from Solanum tuberosum (Potato).